A 349-amino-acid polypeptide reads, in one-letter code: Phosphoribosylformylglycinamidine cyclo-ligase (349 aa).

It belongs to the AIR synthase family.

The protein resides in the cytoplasm. The enzyme catalyses 2-formamido-N(1)-(5-O-phospho-beta-D-ribosyl)acetamidine + ATP = 5-amino-1-(5-phospho-beta-D-ribosyl)imidazole + ADP + phosphate + H(+). It participates in purine metabolism; IMP biosynthesis via de novo pathway; 5-amino-1-(5-phospho-D-ribosyl)imidazole from N(2)-formyl-N(1)-(5-phospho-D-ribosyl)glycinamide: step 2/2. This chain is Phosphoribosylformylglycinamidine cyclo-ligase, found in Methanococcus maripaludis (strain C5 / ATCC BAA-1333).